Reading from the N-terminus, the 1074-residue chain is MKLKNLYIENIRSYRKLDFTFEDGVTVISGVNGSGKSSLLEACFMGLFGSKILSKDFVLADMIFKGAETAKINLGFEHLGKEYLIEQAFRYSSKSENASSSKCVLYADGENIIDQATRTYEEVRTLLNMDEEAYRNCAYIRQGEIDVLINAKPKDRQRMIDDLLQLGKLEEYRERTGYAKTAVRRLERDTKNSLVGVKAEIEGIESTEPVKALNGLKQKAKETDGSLKELNEKKDYAAARKGELDLRIAEYRERLQEIEVLKEAIRKTQEDKAGCFKEKEAFSGEVQGQRRILLELGEENTGLRDDCGFGDLEIEALLLHQEKEESSAREKVNAVSKDLALLLKEGETGSQALCELEKEKTQAERTLLECRTSIGAANKEIEGYRENIRKLEEESKGLREKAGFKAASGAADEIALLIKEFEEKESLLRDRKNEASTKLGLSLKEKETCDLNLVELEKELQNAGAAVRKGSTEIEALEKELRENSKAVLDIQEQKSEVLAELKGLGFAADQLENLEDFSELLLENKSRLHGKEKELEATLRELENNIRKNRELFAAGKCPTCGQELKGSEIACTAEECEDKKEKLASELADIKVQHAELEKKITRLKDAKKLEKRISDYDIEIEKLQEKAKASGKLIETHRARIEEDALKLESLDKRKQELETSGRQLLSDIKTLQVQEAEARKAHIEGEKTLIEVKTLDRKLAENTAEIESLNGKIRTSLALIENYGERLGELNDKLKALAEKENLSKEKLKALELALEAAQKKENEAKKAHSESEKLLGQAKKLQANLLSMENIKHKISELEAAIRNLAEKVGFLDREILERSERIRQLGEKLEGNRLSELQQKRAQFEQAQAKITENIREKTEEKDSLLKEIGMLENSLKRLRELRKELKALENRQLYLEAVYSNAEELENTYIRVRADMRARNIGALSVLLNEMFAFMYTNNAYSHIELDPEYNLTVYRKDGTPLEPKLLSGGERAIFNLVLRCAIYRLLALGFGGDKADGLPPMILDEPTVFLDRGHIRQLLKLIDMMRSIGVGQIIVVSHDDSLIDSADHVFQVEKDPLTNMSSITRL.

ATP-binding positions include Arg12, 32 to 38 (NGSGKSS), and Gln142. Coiled coils occupy residues 355–402 (ELEK…REKA) and 452–506 (NLVE…KGLG). The 100-residue stretch at 512-611 (LENLEDFSEL…KITRLKDAKK (100 aa)) folds into the Zinc-hook domain. Residues Cys559 and Cys562 each coordinate Zn(2+). Coiled coils occupy residues 574-611 (TAEECEDKKEKLASELADIKVQHAELEKKITRLKDAKK), 649-678 (LKLESLDKRKQELETSGRQLLSDIKTLQVQ), 749-823 (KEKL…EILE), and 865-895 (TEEKDSLLKEIGMLENSLKRLRELRKELKAL). Residue 973 to 978 (LLSGGE) participates in ATP binding.

It belongs to the SMC family. RAD50 subfamily. As to quaternary structure, homodimer. Forms a heterotetramer composed of two Mre11 subunits and two Rad50 subunits. Zn(2+) serves as cofactor.

In terms of biological role, part of the Rad50/Mre11 complex, which is involved in the early steps of DNA double-strand break (DSB) repair. The complex may facilitate opening of the processed DNA ends to aid in the recruitment of HerA and NurA. Rad50 controls the balance between DNA end bridging and DNA resection via ATP-dependent structural rearrangements of the Rad50/Mre11 complex. The chain is DNA double-strand break repair Rad50 ATPase from Methanosarcina acetivorans (strain ATCC 35395 / DSM 2834 / JCM 12185 / C2A).